A 586-amino-acid chain; its full sequence is Aspartate--tRNA(Asp/Asn) ligase (586 aa).

Glu-172 contacts L-aspartate. Residues 196 to 199 form an aspartate region; the sequence is QLYK. Residue Arg-218 coordinates L-aspartate. ATP contacts are provided by residues 218 to 220 and Gln-227; that span reads RDE. His-446 contacts L-aspartate. Glu-480 is a binding site for ATP. Arg-487 serves as a coordination point for L-aspartate. 532 to 535 contributes to the ATP binding site; that stretch reads GIDR.

The protein belongs to the class-II aminoacyl-tRNA synthetase family. Type 1 subfamily. As to quaternary structure, homodimer.

The protein localises to the cytoplasm. The enzyme catalyses tRNA(Asx) + L-aspartate + ATP = L-aspartyl-tRNA(Asx) + AMP + diphosphate. In terms of biological role, aspartyl-tRNA synthetase with relaxed tRNA specificity since it is able to aspartylate not only its cognate tRNA(Asp) but also tRNA(Asn). Reaction proceeds in two steps: L-aspartate is first activated by ATP to form Asp-AMP and then transferred to the acceptor end of tRNA(Asp/Asn). The chain is Aspartate--tRNA(Asp/Asn) ligase from Borreliella burgdorferi (strain ATCC 35210 / DSM 4680 / CIP 102532 / B31) (Borrelia burgdorferi).